A 317-amino-acid chain; its full sequence is Transcription initiation factor IIB 3 (317 aa).

Residues 1 to 14 (MERATREREKEQRE) show a composition bias toward basic and acidic residues. The segment at 1–25 (MERATREREKEQREQAQTNDEAQQC) is disordered. The TFIIB-type zinc-finger motif lies at 21–50 (EAQQCPECNSANVITDQSERVCEDCGLVLE). Cys25, Cys28, Cys42, and Cys45 together coordinate Zn(2+). Residues 62-83 (AFNSSERDQKSRVGAPTTKTMH) are disordered. 2 tandem repeats follow at residues 136-219 (SEID…AQEL) and 230-311 (EYLP…EQIE).

The protein belongs to the TFIIB family.

Functionally, stabilizes TBP binding to an archaeal box-A promoter. Also responsible for recruiting RNA polymerase II to the pre-initiation complex (DNA-TBP-TFIIB). This Halobacterium salinarum (strain ATCC 700922 / JCM 11081 / NRC-1) (Halobacterium halobium) protein is Transcription initiation factor IIB 3.